The primary structure comprises 379 residues: Pectin lyase B (379 aa).

An N-terminal signal peptide occupies residues 1–19 (MRLHAPILSLLAAAASTSA). 2 disulfides stabilise this stretch: cysteine 82-cysteine 101 and cysteine 91-cysteine 225. A glycan (N-linked (GlcNAc...) asparagine) is linked at asparagine 128. Arginine 255 is an active-site residue. An intrachain disulfide couples cysteine 322 to cysteine 330.

It belongs to the polysaccharide lyase 1 family.

The protein localises to the secreted. It carries out the reaction Eliminative cleavage of (1-&gt;4)-alpha-D-galacturonan methyl ester to give oligosaccharides with 4-deoxy-6-O-methyl-alpha-D-galact-4-enuronosyl groups at their non-reducing ends.. Pectinolytic enzymes consist of four classes of enzymes: pectin lyase, polygalacturonase, pectin methylesterase and rhamnogalacturonase. Among pectinolytic enzymes, pectin lyase is the most important in depolymerization of pectin, since it cleaves internal glycosidic bonds of highly methylated pectins. The protein is Pectin lyase B (pelB) of Emericella nidulans (strain FGSC A4 / ATCC 38163 / CBS 112.46 / NRRL 194 / M139) (Aspergillus nidulans).